The chain runs to 197 residues: Dephospho-CoA kinase (197 aa).

In terms of domain architecture, DPCK spans 5–197 (RLGLTGSIGM…IAHIRETADA (193 aa)). 13-18 (GMGKST) is a binding site for ATP.

This sequence belongs to the CoaE family.

Its subcellular location is the cytoplasm. The catalysed reaction is 3'-dephospho-CoA + ATP = ADP + CoA + H(+). It participates in cofactor biosynthesis; coenzyme A biosynthesis; CoA from (R)-pantothenate: step 5/5. In terms of biological role, catalyzes the phosphorylation of the 3'-hydroxyl group of dephosphocoenzyme A to form coenzyme A. The chain is Dephospho-CoA kinase from Cereibacter sphaeroides (strain ATCC 17023 / DSM 158 / JCM 6121 / CCUG 31486 / LMG 2827 / NBRC 12203 / NCIMB 8253 / ATH 2.4.1.) (Rhodobacter sphaeroides).